The following is a 294-amino-acid chain: Probable 2-(5''-triphosphoribosyl)-3'-dephosphocoenzyme-A synthase (294 aa).

The protein belongs to the CitG/MdcB family.

It carries out the reaction 3'-dephospho-CoA + ATP = 2'-(5''-triphospho-alpha-D-ribosyl)-3'-dephospho-CoA + adenine. This Streptococcus pyogenes serotype M5 (strain Manfredo) protein is Probable 2-(5''-triphosphoribosyl)-3'-dephosphocoenzyme-A synthase.